The primary structure comprises 121 residues: Peptidyl-tRNA hydrolase (121 aa).

It belongs to the PTH2 family.

The protein localises to the cytoplasm. It catalyses the reaction an N-acyl-L-alpha-aminoacyl-tRNA + H2O = an N-acyl-L-amino acid + a tRNA + H(+). The natural substrate for this enzyme may be peptidyl-tRNAs which drop off the ribosome during protein synthesis. The polypeptide is Peptidyl-tRNA hydrolase (Staphylothermus marinus (strain ATCC 43588 / DSM 3639 / JCM 9404 / F1)).